The primary structure comprises 801 residues: Triacylglycerol lipase SDP1L (801 aa).

Asn-130 carries N-linked (GlcNAc...) asparagine glycosylation. 2 consecutive transmembrane segments (helical) span residues 232–249 (ALLL…LGVV) and 261–277 (IIAG…VVGT). The 204-residue stretch at 233–436 (LLLSGGASLG…EMDLPMIQLK (204 aa)) folds into the PNPLA domain. The GXSXG signature appears at 264–268 (GSSVG). Ser-266 acts as the Nucleophile in catalysis. Asn-328 and Asn-332 each carry an N-linked (GlcNAc...) asparagine glycan. Asp-423 functions as the Proton acceptor in the catalytic mechanism. N-linked (GlcNAc...) asparagine glycosylation is found at Asn-605, Asn-620, Asn-649, Asn-653, Asn-708, and Asn-759. The segment at 648–675 (SNRTSNLSHTYDAGSECDSPEAEDWTRS) is disordered. Positions 750–801 (MNSEPEDSQNESEIPETPESVQLDSPEKDIIDGESSASEDGDAQANLIHDHE) are disordered. Residues 753-765 (EPEDSQNESEIPE) show a composition bias toward acidic residues.

In terms of tissue distribution, highly expressed in mature pollen.

The protein localises to the lipid droplet. The protein resides in the membrane. The enzyme catalyses a triacylglycerol + H2O = a diacylglycerol + a fatty acid + H(+). Functionally, may be involved in the release of fatty acids from the oil body in germinating seedlings. Can hydrolyze triacylglycerols in vitro. This Arabidopsis thaliana (Mouse-ear cress) protein is Triacylglycerol lipase SDP1L.